The sequence spans 260 residues: Putative methylesterase 19 (260 aa).

The Acyl-ester intermediate role is filled by serine 81. Catalysis depends on charge relay system residues aspartate 210 and histidine 238.

Belongs to the AB hydrolase superfamily. Methylesterase family.

Putative methylesterase. The chain is Putative methylesterase 19 from Arabidopsis thaliana (Mouse-ear cress).